A 198-amino-acid chain; its full sequence is Glycerol-3-phosphate acyltransferase (198 aa).

Transmembrane regions (helical) follow at residues 5 to 25, 114 to 134, and 154 to 176; these read AVILVIGLSYLVGSVPTGYLI, VLIMLPPVALATAAAVWIAVL, and AFALGGVGWRHVLFGLFLALVAV.

This sequence belongs to the PlsY family. In terms of assembly, probably interacts with PlsX.

The protein localises to the cell membrane. It catalyses the reaction an acyl phosphate + sn-glycerol 3-phosphate = a 1-acyl-sn-glycero-3-phosphate + phosphate. It functions in the pathway lipid metabolism; phospholipid metabolism. Functionally, catalyzes the transfer of an acyl group from acyl-phosphate (acyl-PO(4)) to glycerol-3-phosphate (G3P) to form lysophosphatidic acid (LPA). This enzyme utilizes acyl-phosphate as fatty acyl donor, but not acyl-CoA or acyl-ACP. The sequence is that of Glycerol-3-phosphate acyltransferase from Desulforudis audaxviator (strain MP104C).